Reading from the N-terminus, the 295-residue chain is MVRTPCCKEEGIKKGAWTPEEDQKLIAYLHLHGEGGWRTLPEKAGLKRCGKSCRLRWANYLRPDIKRGEFSPEEDDTIIKLHALKGNKWAAIATSLAGRTDNEIKNYWNTNLKKRLKQKGIDAITHKPINSTGQTGFEPKVNKPVYSSGSARLLNRVASKYAVELNRDLLTGIISGNSTVAEDSQNSGDVDSPTSTLLNKMAATSVLINTTTTYSGFSDNCSFTDEFNEFFNNEEISDIYTTVDNFGFMEELKSILSYGDASAGVIENSPEVNVADAMEFIDSWNEDDNMVGVFV.

2 consecutive HTH myb-type domains span residues 9–61 (EEGI…ANYL) and 62–116 (RPDI…KKRL). DNA-binding regions (H-T-H motif) lie at residues 37–61 (WRTL…ANYL) and 89–112 (WAAI…NTNL).

Can form complexes with MYC2, MYC3 or MYC4. Expressed in trichomes.

The protein resides in the nucleus. In terms of biological role, transcription factor involved in tryptophan gene activation and in indole-3-acetic acid (IAA) and indolic glucosinolates (IG) biosynthesis. Acts as a direct transcriptional activator of both Trp synthesis genes and Trp secondary metabolism genes. The chain is Transcription factor MYB34 (MYB34) from Arabidopsis thaliana (Mouse-ear cress).